Consider the following 217-residue polypeptide: Ribonuclease HII (217 aa).

The RNase H type-2 domain occupies 27 to 216 (SQVAGVDEAG…VKESIQEGVC (190 aa)). Positions 33, 34, and 126 each coordinate a divalent metal cation.

This sequence belongs to the RNase HII family. Mn(2+) is required as a cofactor. Mg(2+) serves as cofactor.

It is found in the cytoplasm. The catalysed reaction is Endonucleolytic cleavage to 5'-phosphomonoester.. Functionally, endonuclease that specifically degrades the RNA of RNA-DNA hybrids. This Chlamydia trachomatis serovar L2 (strain ATCC VR-902B / DSM 19102 / 434/Bu) protein is Ribonuclease HII.